A 314-amino-acid polypeptide reads, in one-letter code: tRNA uridine(34) hydroxylase (314 aa).

Residues 135-229 (ADPETLVIDT…YLEQIPAEES (95 aa)) form the Rhodanese domain. Catalysis depends on Cys189, which acts as the Cysteine persulfide intermediate.

This sequence belongs to the TrhO family.

It carries out the reaction uridine(34) in tRNA + AH2 + O2 = 5-hydroxyuridine(34) in tRNA + A + H2O. Its function is as follows. Catalyzes oxygen-dependent 5-hydroxyuridine (ho5U) modification at position 34 in tRNAs. This chain is tRNA uridine(34) hydroxylase, found in Sinorhizobium fredii (strain NBRC 101917 / NGR234).